The sequence spans 119 residues: Large ribosomal subunit protein uL18 (119 aa).

It belongs to the universal ribosomal protein uL18 family. Part of the 50S ribosomal subunit; part of the 5S rRNA/L5/L18/L25 subcomplex. Contacts the 5S and 23S rRNAs.

This is one of the proteins that bind and probably mediate the attachment of the 5S RNA into the large ribosomal subunit, where it forms part of the central protuberance. The polypeptide is Large ribosomal subunit protein uL18 (Anaeromyxobacter dehalogenans (strain 2CP-1 / ATCC BAA-258)).